Here is a 375-residue protein sequence, read N- to C-terminus: MQLQFRSWMLAALTLLVVFLIFADISEIEEEIGNSGGRGTIRSAVNSLHSKSNRAEVVINGSSSPAVVDRSNESIKHNIQPASSKWRHNQTLSLRIRKQILKFLDAEKDISVLKGTLKPGDIIHYIFDRDSTMNVSQNLYELLPRTSPLKNKHFGTCAIVGNSGVLLNSGCGQEIDAHSFVIRCNLAPVQEYARDVGLKTDLVTMNPSVIQRAFEDLVNATWREKLLQRLHSLNGSILWIPAFMARGGKERVEWVNELILKHHVNVRTAYPSLPLLHAVRGYWLTNKVHIKRPTTGLLMYTLATRFCNQIYLYGFWPFPLDQNQNPVKYHYYDSLKYGYTSQASPHTMPLEFKALKSLHEQGALKLTVGQCDGAT.

Over 1–6 (MQLQFR) the chain is Cytoplasmic. A helical; Signal-anchor for type II membrane protein transmembrane segment spans residues 7–23 (SWMLAALTLLVVFLIFA). Residues 24 to 375 (DISEIEEEIG…LTVGQCDGAT (352 aa)) lie on the Lumenal side of the membrane. 4 N-linked (GlcNAc...) asparagine glycosylation sites follow: Asn60, Asn72, Asn89, and Asn134. Cystine bridges form between Cys157-Cys307 and Cys171-Cys371. 2 residues coordinate CMP-N-acetyl-beta-neuraminate: Asn162 and Asn185. N-linked (GlcNAc...) asparagine glycosylation is found at Asn219 and Asn234. CMP-N-acetyl-beta-neuraminate contacts are provided by Thr294, Thr295, Gly296, Trp316, Tyr329, and His330. Catalysis depends on His346, which acts as the Proton donor/acceptor.

This sequence belongs to the glycosyltransferase 29 family. Autopolysialylated. Autopolysialylation is not a prerequisite for the polysialylation acitity, but enhances the polysialylation acitity.

It localises to the golgi apparatus membrane. The protein localises to the secreted. It is found in the cell membrane. It catalyses the reaction [N-acetyl-alpha-D-neuraminosyl-(2-&gt;8)](n) + CMP-N-acetyl-beta-neuraminate = [N-acetyl-alpha-D-neuraminosyl-(2-&gt;8)](n+1) + CMP + H(+). It functions in the pathway protein modification; protein glycosylation. Its function is as follows. Catalyzes the transfer of a sialic acid from a CMP-linked sialic acid donor onto a terminal alpha-2,3-, alpha-2,6-, or alpha-2,8-linked sialic acid of an N-linked glycan acceptor through alpha-2,8-linkages. Therefore, participates in polysialic acid synthesis on various sialylated N-acetyllactosaminyl oligosaccharides (alpha-2,3-, alpha-2,6-, or alpha-2,8-linked sialic acid), including NCAM1, NCAM1 N-glycans, FETUB N-glycans, and to a lesser extent sialylparagloboside (SPG) and AHSG, which does not require the initial addition of an alpha 2,8-sialic acid. However, does not exhibit sialic acid-polymerase activity. Catalyzes polysialic acid synthesis in the hippocampal on NCAM1 and supports neurite outgrowth. ST8SIA2-mediated polysialylation influences on oligodendrocyte differentiation and may promote the integrity of myelin and axons. The polypeptide is Alpha-2,8-sialyltransferase 8B (Pan troglodytes (Chimpanzee)).